The following is a 78-amino-acid chain: Acyl carrier protein (78 aa).

Positions 1–76 (MSLEERVKEI…DVINYLKEKV (76 aa)) constitute a Carrier domain. Ser36 bears the O-(pantetheine 4'-phosphoryl)serine mark.

It belongs to the acyl carrier protein (ACP) family. 4'-phosphopantetheine is transferred from CoA to a specific serine of apo-ACP by AcpS. This modification is essential for activity because fatty acids are bound in thioester linkage to the sulfhydryl of the prosthetic group.

The protein resides in the cytoplasm. Its pathway is lipid metabolism; fatty acid biosynthesis. In terms of biological role, carrier of the growing fatty acid chain in fatty acid biosynthesis. The polypeptide is Acyl carrier protein (Aquifex aeolicus (strain VF5)).